Consider the following 406-residue polypeptide: Inactive serine protease 35 (406 aa).

The N-terminal stretch at 1 to 17 (MLLWLIIFVSGWTLSLG) is a signal peptide. Asparagine 87 is a glycosylation site (N-linked (GlcNAc...) asparagine). Residues 121–401 (VYGTDSRFSI…ICLWIHGNAA (281 aa)) enclose the Peptidase S1 domain. A disulfide bridge links cysteine 151 with cysteine 167. Residues 186-204 (LKMRNKGGRKKRRGSRRSR) show a composition bias toward basic residues. A disordered region spans residues 186–248 (LKMRNKGGRK…RPSFQWTRVK (63 aa)).

This sequence belongs to the peptidase S1 family.

It is found in the secreted. This is Inactive serine protease 35 (Prss35) from Rattus norvegicus (Rat).